The sequence spans 280 residues: Cycloeucalenol cycloisomerase (280 aa).

The next 6 membrane-spanning stretches (helical) occupy residues 22–42 (LFFLFYTPFWLTLCLGIVVPY), 53–73 (YLLLALVSAVPAFVIPMLLVG), 89–109 (ANLWIIVFSYVGNYFWTHYFF), 167–187 (FEAAWILALSYFIAYLETIAI), 201–221 (MYRVGCLFYAIYFIVSFPMFF), and 244–264 (AMLVTIILDLWRLFLGPIVPL).

The protein localises to the membrane. It carries out the reaction cycloeucalenol = obtusifoliol. Functionally, converts pentacyclic cyclopropyl sterols to tetracyclic sterols. This Arabidopsis thaliana (Mouse-ear cress) protein is Cycloeucalenol cycloisomerase (CPI1).